The chain runs to 451 residues: MEKTKLTGRIVTRDDPDYNEARTNINLSLERYPDIIVFCQNKQDALNALKWARENRVPFRIRGGRHSYENFSLLNNGLVIDLSEMKKITVNQDKKLAYIEAGAELGEVYRTLWQYGLTLPAGTIANVGLTGLTLGGGIGLLTRAAGLTCDSLVQLEMIVADEKEGADLITVSCSNHPDLFWASQGGGGGNFGIVTSMTFKAVPISQVSIFSITWGWDDFEEVYNTWQNWAPYTDDRLTSSIEFWPKEVNRIEALGQFVGPKTELKKLLKPLLKAGSPTSGMVKTTPFIEAVTFFNSPGGNQPQKMKRSGSFIEKPLSERAISTIKHFLEHAPNQNASVWQQALGGAAGRVAPDQTAFYYRDAIIAQEYLTNWTSPGEKRQNVRWIEGLRTSLSKETMGDYVNWPDIEIRNWPRTYYGENVERLRRVKTTYDPENVFRFEQSIPPLRRSLFF.

In terms of domain architecture, FAD-binding PCMH-type spans 29-204; it reads LERYPDIIVF…TSMTFKAVPI (176 aa). A Pros-8alpha-FAD histidine modification is found at histidine 66.

Belongs to the oxygen-dependent FAD-linked oxidoreductase family. It depends on FAD as a cofactor.

This is an uncharacterized protein from Bacillus subtilis (strain 168).